Here is a 124-residue protein sequence, read N- to C-terminus: Period circadian protein (124 aa).

The tract at residues 30–124 is disordered; sequence TAPVELDPPK…TVTLTESLLN (95 aa). Over residues 71-96 the composition is skewed to low complexity; the sequence is SGNFTTGSNVRMSSVTNTSNAGTGTS. Gly residues predominate over residues 97-107; it reads SAGGNGNGGSG.

Forms a heterodimer with timeless (TIM); the complex then translocates into the nucleus. Post-translationally, phosphorylated with a circadian rhythmicity, probably by the double-time protein (dbt). Phosphorylation could be implicated in the stability of per monomer and in the formation of heterodimer per-tim.

The protein localises to the nucleus. Its subcellular location is the cytoplasm. It localises to the perinuclear region. Functionally, essential for biological clock functions. Determines the period length of circadian and ultradian rhythms; an increase in PER dosage leads to shortened circadian rhythms and a decrease leads to lengthened circadian rhythms. Essential for the circadian rhythmicity of locomotor activity, eclosion behavior, and for the rhythmic component of the male courtship song that originates in the thoracic nervous system. The biological cycle depends on the rhythmic formation and nuclear localization of the TIM-PER complex. Light induces the degradation of TIM, which promotes elimination of PER. Nuclear activity of the heterodimer coordinatively regulates PER and TIM transcription through a negative feedback loop. Behaves as a negative element in circadian transcriptional loop. Does not appear to bind DNA, suggesting indirect transcriptional inhibition. The sequence is that of Period circadian protein (per) from Hirtodrosophila pictiventris (Fruit fly).